Here is a 380-residue protein sequence, read N- to C-terminus: QRFP-like peptide receptor (380 aa).

At 1-51 (MMLGNMTFTQTILHELLRQHNMTKNEFIERFGLPPLVYVPELSPGAKTVTL) the chain is on the extracellular side. N-linked (GlcNAc...) asparagine glycans are attached at residues N5 and N21. Residues 52–72 (VFYVIIFLAALLGNTLVVVVV) traverse the membrane as a helical segment. Residues 73-83 (WKNKVMRTTMN) lie on the Cytoplasmic side of the membrane. The helical transmembrane segment at 84-104 (IFICSLAASDLLITIVCIPVT) threads the bilayer. Residues 105–122 (LMQNMLQNWIMGDFMCKL) lie on the Extracellular side of the membrane. An intrachain disulfide couples C120 to C203. A helical transmembrane segment spans residues 123–143 (VPFIQTIAVASSILTLTGIAI). Over 144–164 (ERYYAIIHPLKVKYLLSKTRA) the chain is Cytoplasmic. Residues 165-185 (GIILALVWVVSVGVATPMLFV) form a helical membrane-spanning segment. Over 186–216 (HKAEEIHDFLYEQRFVTCQEKWWGQTQQTSY) the chain is Extracellular. Residues 217–237 (TIFNLVVLFIIPLLTMTSLYI) traverse the membrane as a helical segment. Residues 238–269 (RIAHRLWVQQPVGVTGNFAHGNSVRRKRQAVK) are Cytoplasmic-facing. A helical membrane pass occupies residues 270–290 (MLVVVVLLFAVCWLPYHTVTV). Topologically, residues 291–305 (MNELTGLRLEEKSAK) are extracellular. Residues 306 to 326 (LLIAIVQLIAFSNSFNNPVVY) form a helical membrane-spanning segment. The Cytoplasmic portion of the chain corresponds to 327 to 380 (AILNENFKKNFMTMLRCRVNRVSPQQVTPNTLQTPLEQSTRSCRLPAGAPNQQI).

This sequence belongs to the G-protein coupled receptor 1 family.

It localises to the cell membrane. Receptor for QRFP-like peptide. The activity of this receptor is mediated by G proteins which activate a phosphatidyl-inositol-calcium second messenger system. The polypeptide is QRFP-like peptide receptor (Branchiostoma floridae (Florida lancelet)).